The primary structure comprises 102 residues: Integration host factor subunit alpha (102 aa).

This sequence belongs to the bacterial histone-like protein family. As to quaternary structure, heterodimer of an alpha and a beta chain.

Its function is as follows. This protein is one of the two subunits of integration host factor, a specific DNA-binding protein that functions in genetic recombination as well as in transcriptional and translational control. This is Integration host factor subunit alpha from Paracoccus denitrificans (strain Pd 1222).